The following is a 203-amino-acid chain: MEPFDFFNSFKHALAVLKLPSKSMSTTDLKAFGERFAKSHTKFPAAPAMTKSILPNFSTVFLTAFSTCSKLRTSTFAIAKTASLSFANCEIPFAACSVLSWSLPTIAALQPRRTKASVCTRHIVPAPPVTNATLPLNKSGLQEPSVTNLPSKVFAVFIVSMTRTYDLPNSKSVNIRNYELLFKFRFSLIWSLTLIPILFGKLQ.

The helical transmembrane segment at 89 to 109 (CEIPFAACSVLSWSLPTIAAL) threads the bilayer.

Its subcellular location is the membrane. This is an uncharacterized protein from Saccharomyces cerevisiae (strain ATCC 204508 / S288c) (Baker's yeast).